The following is a 626-amino-acid chain: Phosphomethylpyrimidine synthase (626 aa).

Residues N237, M266, Y295, H331, 351 to 353 (SRG), 392 to 395 (DGLR), and E431 each bind substrate. H435 serves as a coordination point for Zn(2+). Y458 contacts substrate. Residue H499 coordinates Zn(2+). [4Fe-4S] cluster contacts are provided by C579, C582, and C587.

This sequence belongs to the ThiC family. In terms of assembly, homodimer. [4Fe-4S] cluster serves as cofactor.

It catalyses the reaction 5-amino-1-(5-phospho-beta-D-ribosyl)imidazole + S-adenosyl-L-methionine = 4-amino-2-methyl-5-(phosphooxymethyl)pyrimidine + CO + 5'-deoxyadenosine + formate + L-methionine + 3 H(+). Its pathway is cofactor biosynthesis; thiamine diphosphate biosynthesis. Its function is as follows. Catalyzes the synthesis of the hydroxymethylpyrimidine phosphate (HMP-P) moiety of thiamine from aminoimidazole ribotide (AIR) in a radical S-adenosyl-L-methionine (SAM)-dependent reaction. This is Phosphomethylpyrimidine synthase from Cupriavidus necator (strain ATCC 17699 / DSM 428 / KCTC 22496 / NCIMB 10442 / H16 / Stanier 337) (Ralstonia eutropha).